Here is a 478-residue protein sequence, read N- to C-terminus: ATP synthase subunit beta (478 aa).

164-171 lines the ATP pocket; sequence GGAGVGKT.

This sequence belongs to the ATPase alpha/beta chains family. As to quaternary structure, F-type ATPases have 2 components, CF(1) - the catalytic core - and CF(0) - the membrane proton channel. CF(1) has five subunits: alpha(3), beta(3), gamma(1), delta(1), epsilon(1). CF(0) has three main subunits: a(1), b(2) and c(9-12). The alpha and beta chains form an alternating ring which encloses part of the gamma chain. CF(1) is attached to CF(0) by a central stalk formed by the gamma and epsilon chains, while a peripheral stalk is formed by the delta and b chains.

The protein resides in the cell membrane. It catalyses the reaction ATP + H2O + 4 H(+)(in) = ADP + phosphate + 5 H(+)(out). Produces ATP from ADP in the presence of a proton gradient across the membrane. The catalytic sites are hosted primarily by the beta subunits. The protein is ATP synthase subunit beta of Corynebacterium kroppenstedtii (strain DSM 44385 / JCM 11950 / CIP 105744 / CCUG 35717).